We begin with the raw amino-acid sequence, 239 residues long: Major prion protein (239 aa).

Residues 1 to 15 (MLVLFVATWSDLGLC) form the signal peptide. Positions 15 to 98 (CKKRPKPGGW…NQWNKPSKPK (84 aa)) are disordered. Residues 16–31 (KKRPKPGGWNTGGSRY) form an interaction with ADGRG6 region. Positions 16 to 222 (KKRPKPGGWN…ESQAYYQRGS (207 aa)) are interaction with GRB2, ERI3 and SYN1. Repeat copies occupy residues 44–51 (PQSGGWGQ), 52–59 (PHGGGWGQ), 60–67 (PHGGGWGQ), 68–75 (PHGGGWGQ), and 76–83 (PHGGGWGQ). The 5 X 8 AA tandem repeats of P-H-G-G-G-W-G-Q stretch occupies residues 44 to 83 (PQSGGWGQPHGGGWGQPHGGGWGQPHGGGWGQPHGGGWGQ). The segment covering 47–87 (GGWGQPHGGGWGQPHGGGWGQPHGGGWGQPHGGGWGQGGGT) has biased composition (gly residues). H53, G54, G55, H61, G62, G63, H69, G70, G71, H77, G78, and G79 together coordinate Cu(2+). A disulfide bond links C171 and C206. N-linked (GlcNAc...) asparagine glycans are attached at residues N173 and N189. A lipid anchor (GPI-anchor amidated serine) is attached at S222. The propeptide at 223–239 (SMVLFSSPPVILLISFL) is removed in mature form.

It belongs to the prion family. As to quaternary structure, monomer and homodimer. Has a tendency to aggregate into amyloid fibrils containing a cross-beta spine, formed by a steric zipper of superposed beta-strands. Soluble oligomers may represent an intermediate stage on the path to fibril formation. Copper binding may promote oligomerization. Interacts with GRB2, APP, ERI3/PRNPIP and SYN1. Mislocalized cytosolically exposed PrP interacts with MGRN1; this interaction alters MGRN1 subcellular location and causes lysosomal enlargement. Interacts with APP. Interacts with KIAA1191. Interacts with ADGRG6.

The protein localises to the cell membrane. The protein resides in the golgi apparatus. Its primary physiological function is unclear. May play a role in neuronal development and synaptic plasticity. May be required for neuronal myelin sheath maintenance. May promote myelin homeostasis through acting as an agonist for ADGRG6 receptor. May play a role in iron uptake and iron homeostasis. Soluble oligomers are toxic to cultured neuroblastoma cells and induce apoptosis (in vitro). Association with GPC1 (via its heparan sulfate chains) targets PRNP to lipid rafts. Also provides Cu(2+) or Zn(2+) for the ascorbate-mediated GPC1 deaminase degradation of its heparan sulfate side chains. The chain is Major prion protein (PRNP) from Aotus trivirgatus (Three-striped night monkey).